A 185-amino-acid polypeptide reads, in one-letter code: MRNQKGVTVWFTGLSGAGKTTVAREVERQLKEKGYYVQRLDGDIVRQHLTRDLGFTKEDRDENIRRNSFVAKLLTQNDIITLCSFISPYRKARQTAREIIGEFIEVYVNAPLEVCEDRDVKGLYAKARAGEIDNFTGISDPYEPPQNPDLELRTDKETVEESASKVIEYLEEKGYINLPEDVLAG.

Position 13–20 (13–20 (GLSGAGKT)) interacts with ATP. The Phosphoserine intermediate role is filled by Ser-87.

The protein belongs to the APS kinase family.

The catalysed reaction is adenosine 5'-phosphosulfate + ATP = 3'-phosphoadenylyl sulfate + ADP + H(+). The protein operates within sulfur metabolism; hydrogen sulfide biosynthesis; sulfite from sulfate: step 2/3. Catalyzes the synthesis of activated sulfate. This is Adenylyl-sulfate kinase from Halothermothrix orenii (strain H 168 / OCM 544 / DSM 9562).